The following is a 228-amino-acid chain: Phosphoglycolate phosphatase (228 aa).

The active-site Nucleophile is the aspartate 9. Mg(2+) is bound by residues aspartate 9 and aspartate 11. Lysine 151 is a binding site for substrate. Mg(2+)-binding residues include aspartate 174 and aspartate 178.

This sequence belongs to the archaeal SPP-like hydrolase family. Requires Mg(2+) as cofactor.

The enzyme catalyses 2-phosphoglycolate + H2O = glycolate + phosphate. Its function is as follows. Catalyzes the dephosphorylation of 2-phosphoglycolate. This is Phosphoglycolate phosphatase from Pyrobaculum islandicum (strain DSM 4184 / JCM 9189 / GEO3).